We begin with the raw amino-acid sequence, 234 residues long: Ubiquinone biosynthesis O-methyltransferase (234 aa).

Residues Arg-39, Gly-59, Asp-80, and Met-124 each coordinate S-adenosyl-L-methionine.

The protein belongs to the methyltransferase superfamily. UbiG/COQ3 family.

The enzyme catalyses a 3-demethylubiquinol + S-adenosyl-L-methionine = a ubiquinol + S-adenosyl-L-homocysteine + H(+). It catalyses the reaction a 3-(all-trans-polyprenyl)benzene-1,2-diol + S-adenosyl-L-methionine = a 2-methoxy-6-(all-trans-polyprenyl)phenol + S-adenosyl-L-homocysteine + H(+). Its pathway is cofactor biosynthesis; ubiquinone biosynthesis. Its function is as follows. O-methyltransferase that catalyzes the 2 O-methylation steps in the ubiquinone biosynthetic pathway. This is Ubiquinone biosynthesis O-methyltransferase from Aliivibrio fischeri (strain MJ11) (Vibrio fischeri).